The chain runs to 118 residues: Cytochrome b-c1 complex subunit 7 (118 aa).

An igE-binding. Immunodominant epitope; induces specific IgE antibody production in mice. Causes degranulation of rat basophilic leukemia (RBL) cells and the release of beta-hexosaminidase from them region spans residues 1–32; sequence MVHLTKTLRFINNPGFRKFYYGLQGYNKYGLY.

The protein belongs to the UQCRB/QCR7 family. In terms of assembly, component of the ubiquinol-cytochrome c oxidoreductase (cytochrome b-c1 complex, complex III, CIII), a multisubunit enzyme composed of 3 respiratory subunits cytochrome b, cytochrome c1 and Rieske protein, 2 core protein subunits, and additional low-molecular weight protein subunits. The complex exists as an obligatory dimer and forms supercomplexes (SCs) in the inner mitochondrial membrane with cytochrome c oxidase (complex IV, CIV).

It is found in the mitochondrion inner membrane. Functionally, component of the ubiquinol-cytochrome c oxidoreductase, a multisubunit transmembrane complex that is part of the mitochondrial electron transport chain which drives oxidative phosphorylation. The respiratory chain contains 3 multisubunit complexes succinate dehydrogenase (complex II, CII), ubiquinol-cytochrome c oxidoreductase (cytochrome b-c1 complex, complex III, CIII) and cytochrome c oxidase (complex IV, CIV), that cooperate to transfer electrons derived from NADH and succinate to molecular oxygen, creating an electrochemical gradient over the inner membrane that drives transmembrane transport and the ATP synthase. The cytochrome b-c1 complex catalyzes electron transfer from ubiquinol to cytochrome c, linking this redox reaction to translocation of protons across the mitochondrial inner membrane, with protons being carried across the membrane as hydrogens on the quinol. In the process called Q cycle, 2 protons are consumed from the matrix, 4 protons are released into the intermembrane space and 2 electrons are passed to cytochrome c. The protein is Cytochrome b-c1 complex subunit 7 of Dermatophagoides farinae (American house dust mite).